Consider the following 285-residue polypeptide: Pseudouridine-5'-phosphate glycosidase (285 aa).

The Proton donor role is filled by Glu17. Residues Lys77 and Val97 each coordinate substrate. Asp126 contributes to the Mn(2+) binding site. Position 128 to 130 (128 to 130 (SQD)) interacts with substrate. Lys147 serves as the catalytic Nucleophile.

This sequence belongs to the pseudouridine-5'-phosphate glycosidase family. Homotrimer. It depends on Mn(2+) as a cofactor.

The catalysed reaction is D-ribose 5-phosphate + uracil = psi-UMP + H2O. Functionally, catalyzes the reversible cleavage of pseudouridine 5'-phosphate (PsiMP) to ribose 5-phosphate and uracil. Functions biologically in the cleavage direction, as part of a pseudouridine degradation pathway. This chain is Pseudouridine-5'-phosphate glycosidase, found in Thermotoga sp. (strain RQ2).